Reading from the N-terminus, the 434-residue chain is N-acylneuraminate cytidylyltransferase (434 aa).

Met1 carries the N-acetylmethionine modification. The interval 1–42 (MDSVEKGAATSVSNPRGRPSRGRPPKLQRNSRGGQGRGVEKP) is disordered. The short motif at 15 to 31 (PRGRPSRGRPPKLQRNS) is the BC1 motif element. Residues Arg37 and Arg52 each carry the omega-N-methylarginine modification. Residues Arg52, Asn62, Arg111, Ser120, Ser122, and Gln143 each coordinate substrate. A BC2 motif motif is present at residues 200–206 (KRPRRQD). Residue Arg201 is part of the active site. The short motif at 269 to 276 (KEKLKEIK) is the BC3 motif element.

It belongs to the CMP-NeuNAc synthase family. In terms of assembly, homotetramer; the active enzyme is formed by a dimer of dimers.

The protein localises to the nucleus. The catalysed reaction is an N-acylneuraminate + CTP = a CMP-N-acyl-beta-neuraminate + diphosphate. Its pathway is amino-sugar metabolism; N-acetylneuraminate metabolism. Functionally, catalyzes the activation of N-acetylneuraminic acid (NeuNAc) to cytidine 5'-monophosphate N-acetylneuraminic acid (CMP-NeuNAc), a substrate required for the addition of sialic acid. Has some activity toward NeuNAc, N-glycolylneuraminic acid (Neu5Gc) or 2-keto-3-deoxy-D-glycero-D-galacto-nononic acid (KDN). The chain is N-acylneuraminate cytidylyltransferase (CMAS) from Bos taurus (Bovine).